Reading from the N-terminus, the 478-residue chain is ATP synthase subunit beta (478 aa).

151-158 (GGAGVGKT) provides a ligand contact to ATP.

The protein belongs to the ATPase alpha/beta chains family. As to quaternary structure, F-type ATPases have 2 components, CF(1) - the catalytic core - and CF(0) - the membrane proton channel. CF(1) has five subunits: alpha(3), beta(3), gamma(1), delta(1), epsilon(1). CF(0) has three main subunits: a(1), b(2) and c(9-12). The alpha and beta chains form an alternating ring which encloses part of the gamma chain. CF(1) is attached to CF(0) by a central stalk formed by the gamma and epsilon chains, while a peripheral stalk is formed by the delta and b chains.

It is found in the cell inner membrane. The enzyme catalyses ATP + H2O + 4 H(+)(in) = ADP + phosphate + 5 H(+)(out). Produces ATP from ADP in the presence of a proton gradient across the membrane. The catalytic sites are hosted primarily by the beta subunits. This is ATP synthase subunit beta from Azorhizobium caulinodans (strain ATCC 43989 / DSM 5975 / JCM 20966 / LMG 6465 / NBRC 14845 / NCIMB 13405 / ORS 571).